Reading from the N-terminus, the 343-residue chain is SET and MYND domain-containing protein DDB_G0292454 (343 aa).

In terms of domain architecture, SET spans 77–307 (EPFISYPSII…PGDEITISYT (231 aa)). Cys93, Cys96, Cys111, Cys114, Cys120, Cys124, His133, and Cys137 together coordinate Zn(2+). The segment at 93 to 137 (CNHCLKEIKKEEEEIKQECEECKVYKYCSIECKEKSSIEYHSVLC) adopts an MYND-type zinc-finger fold.

It belongs to the class V-like SAM-binding methyltransferase superfamily.

In terms of biological role, probable methyltransferase. This is SET and MYND domain-containing protein DDB_G0292454 from Dictyostelium discoideum (Social amoeba).